We begin with the raw amino-acid sequence, 188 residues long: GMP synthase [glutamine-hydrolyzing] subunit A (188 aa).

Residues 1–188 (MIIIMDNGGQ…RNFAKICGEL (188 aa)) form the Glutamine amidotransferase type-1 domain. The active-site Nucleophile is the Cys-78. Active-site residues include His-165 and Glu-167.

In terms of assembly, heterodimer composed of a glutamine amidotransferase subunit (A) and a GMP-binding subunit (B).

The catalysed reaction is XMP + L-glutamine + ATP + H2O = GMP + L-glutamate + AMP + diphosphate + 2 H(+). Its pathway is purine metabolism; GMP biosynthesis; GMP from XMP (L-Gln route): step 1/1. In terms of biological role, catalyzes the synthesis of GMP from XMP. This chain is GMP synthase [glutamine-hydrolyzing] subunit A, found in Pyrococcus furiosus (strain ATCC 43587 / DSM 3638 / JCM 8422 / Vc1).